A 577-amino-acid polypeptide reads, in one-letter code: Monooxygenase PC-14 (577 aa).

The protein belongs to the FMO family. Requires FAD as cofactor.

The protein operates within secondary metabolite biosynthesis. Functionally, monooxygenase; part of the gene cluster that mediates the biosynthesis of the indole diterpenes penitrems. The geranylgeranyl diphosphate (GGPP) synthase penG catalyzes the first step in penitrem biosynthesis via conversion of farnesyl pyrophosphate and isopentyl pyrophosphate into geranylgeranyl pyrophosphate (GGPP). Condensation of indole-3-glycerol phosphate with GGPP by the prenyl transferase penC then forms 3-geranylgeranylindole (3-GGI). Epoxidation by the FAD-dependent monooxygenase penM leads to a epoxidized-GGI that is substrate of the terpene cyclase penB for cyclization to yield paspaline. Paspaline is subsequently converted to 13-desoxypaxilline by the cytochrome P450 monooxygenase penP, the latter being then converted to paxilline by the cytochrome P450 monooxygenase penQ. Paxilline is converted to beta-paxitriol via C-10 ketoreduction by the short-chain dehydrogenase PC-15 which can be monoprenylated at the C-20 by the indole diterpene prenyltransferase penD. A two-step elimination (acetylation and elimination) process performed by the O-acetyltransferase PC-16 and the P.simplicissimum ptmI-ortholog not yet identified in P.crustosum, leads to the production of the prenylated form of penijanthine. The FAD-linked oxidoreductase ptmO then converts the prenylated form of penijanthine into PC-M5 which is in turn transformed into PC-M4 by the aromatic dimethylallyltransferase PC-22. A series of oxidation steps involving 4 cytochrome P450 monooxygenases (PC-21, PC-05, PC-23, PC-20) and a FAD-dependent monooxygenase (PC-14) are required for the transformation of PC-M4 to penitrems A and E. Synthesis of these final products is proposed to proceed via penitrems D and C (PC-21, PC-05, PC-14) and penitrems B and F (PC-21, PC-05, PC-14, PC-23). The polypeptide is Monooxygenase PC-14 (Penicillium crustosum (Blue mold fungus)).